The chain runs to 182 residues: Large ribosomal subunit protein uL6 (182 aa).

Belongs to the universal ribosomal protein uL6 family. As to quaternary structure, part of the 50S ribosomal subunit.

Its function is as follows. This protein binds to the 23S rRNA, and is important in its secondary structure. It is located near the subunit interface in the base of the L7/L12 stalk, and near the tRNA binding site of the peptidyltransferase center. This is Large ribosomal subunit protein uL6 from Nostoc punctiforme (strain ATCC 29133 / PCC 73102).